The following is a 212-amino-acid chain: uncharacterized protein (212 aa).

Belongs to the flavoredoxin family. It depends on FMN as a cofactor.

This is an uncharacterized protein from Methanothermobacter thermautotrophicus (strain ATCC 29096 / DSM 1053 / JCM 10044 / NBRC 100330 / Delta H) (Methanobacterium thermoautotrophicum).